Consider the following 606-residue polypeptide: Sodium-independent sulfate anion transporter (606 aa).

Over 1 to 51 (MPSSVTALGQARSSGPGMAPSACCCSPAALQRRLPILAWLPSYSLQWLKMD) the chain is Extracellular. The helical transmembrane segment at 52 to 72 (FVAGLSVGLTAIPQALAYAEV) threads the bilayer. Position 73 (Ala-73) is a topological domain, cytoplasmic. Residues 74–94 (GLPPQYGLYSAFMGCFVYFFL) form a helical membrane-spanning segment. Residues 95 to 100 (GTSRDV) are Extracellular-facing. The chain crosses the membrane as a helical span at residues 101-117 (TLGPTAIMSLLVSFYTF). Residues 118 to 119 (HE) lie on the Cytoplasmic side of the membrane. The helical transmembrane segment at 120–140 (PAYAVLLAFLSGCIQLAMGVL) threads the bilayer. Over 141-147 (RLGFLLD) the chain is Extracellular. Residues 148–168 (FISYPVIKGFTSAAAVTIGFG) form a helical membrane-spanning segment. The Cytoplasmic portion of the chain corresponds to 169-197 (QIKNLLGLQNIPRPFFLQVYHTFLRIAET). A helical transmembrane segment spans residues 198–218 (RVGDAVLGLVCMLLLLVLKLM). Residues 219-250 (RDHVPPVHPEMPPGVRLSRGLVWAATTARNAL) lie on the Extracellular side of the membrane. Residues 251–271 (VVSFAALVAYSFEVTGYQPFI) form a helical membrane-spanning segment. Topologically, residues 272–307 (LTGETAEGLPPVRIPPFSVTTANGTISFTEMVQDMG) are cytoplasmic. Residues 308-328 (AGLAVVPLMGLLESIAVAKAF) traverse the membrane as a helical segment. Residues 329–341 (ASQNNYRIDANQE) lie on the Extracellular side of the membrane. A helical transmembrane segment spans residues 342–362 (LLAIGLTNMLGSLVSSYPVTG). Over 363-374 (SFGRTAVNAQSG) the chain is Cytoplasmic. Residues 375 to 395 (VCTPAGGLVTGVLVLLSLDYL) form a helical membrane-spanning segment. Residues 396–398 (TSL) are Extracellular-facing. A helical membrane pass occupies residues 399–419 (FYYIPKSALAAVIIMAVAPLF). Topologically, residues 420–441 (DTKIFRTLWRVKRLDLLPLCVT) are cytoplasmic. Residues 442-462 (FLLCFWEVQYGILAGALVSLL) traverse the membrane as a helical segment. Residues 463 to 606 (MLLHSAARPE…LDQKVALLKA (144 aa)) lie on the Extracellular side of the membrane. Residues 470 to 584 (RPETKVSEGP…EAEKHLRQEP (115 aa)) enclose the STAS domain.

This sequence belongs to the SLC26A/SulP transporter (TC 2.A.53) family. Detected in all tissues tested with highest expression observed in brain, kidney, HEVEC and placenta and lowest in pancreas, skeletal muscle, liver, lung and heart.

Its subcellular location is the cell membrane. It is found in the lysosome membrane. The protein localises to the apical cell membrane. The protein resides in the basolateral cell membrane. It catalyses the reaction hydrogencarbonate(in) + chloride(out) = hydrogencarbonate(out) + chloride(in). The enzyme catalyses sulfate(in) + H(+)(in) = sulfate(out) + H(+)(out). It carries out the reaction oxalate(in) + chloride(out) = oxalate(out) + chloride(in). In terms of biological role, sodium-independent anion exchanger mediating bicarbonate, chloride, sulfate and oxalate transport. Exhibits sodium-independent sulfate anion transporter activity that may cooperate with SLC26A2 to mediate DIDS-sensitive sulfate uptake into high endothelial venules endothelial cells (HEVEC). In the kidney, mediates chloride-bicarbonate exchange, facilitating V-ATPase-mediated acid secretion. May function as a chloride channel, playing an important role in moderating chloride homeostasis and neuronal activity in the cerebellum. The polypeptide is Sodium-independent sulfate anion transporter (Homo sapiens (Human)).